The chain runs to 319 residues: Small ribosomal subunit protein RACK1 (319 aa).

Alanine 2 carries the post-translational modification N-acetylalanine. 7 WD repeats span residues glycine 15–glycine 55, glycine 63–arginine 102, glycine 105–leucine 145, histidine 147–aspartate 191, glycine 194–threonine 233, serine 235–arginine 275, and alanine 284–asparagine 319. Glycyl lysine isopeptide (Lys-Gly) (interchain with G-Cter in ubiquitin) cross-links involve residues lysine 46 and lysine 53. A Phosphothreonine modification is found at threonine 96. Residues lysine 107, lysine 137, and lysine 161 each participate in a glycyl lysine isopeptide (Lys-Gly) (interchain with G-Cter in ubiquitin) cross-link. A Phosphothreonine modification is found at threonine 168.

It belongs to the WD repeat G protein beta family. Ribosomal protein RACK1 subfamily. In terms of assembly, component of the small ribosomal subunit (SSU). Mature yeast ribosomes consist of a small (40S) and a large (60S) subunit. The 40S small subunit contains 1 molecule of ribosomal RNA (18S rRNA) and 33 different proteins (encoded by 57 genes). The large 60S subunit contains 3 rRNA molecules (25S, 5.8S and 5S rRNA) and 46 different proteins (encoded by 81 genes). RACK1 is located at the head of the SSU in the vicinity of the mRNA exit channel. RACK1 interacts with the mRNA-binding protein SCP16. RACK1 also exists simultaneously as a homodimer in a cytosolic non-ribosome-bound form.

It localises to the cytoplasm. Component of the ribosome, a large ribonucleoprotein complex responsible for the synthesis of proteins in the cell. The small ribosomal subunit (SSU) binds messenger RNAs (mRNAs) and translates the encoded message by selecting cognate aminoacyl-transfer RNA (tRNA) molecules. The large subunit (LSU) contains the ribosomal catalytic site termed the peptidyl transferase center (PTC), which catalyzes the formation of peptide bonds, thereby polymerizing the amino acids delivered by tRNAs into a polypeptide chain. The nascent polypeptides leave the ribosome through a tunnel in the LSU and interact with protein factors that function in enzymatic processing, targeting, and the membrane insertion of nascent chains at the exit of the ribosomal tunnel. Located at the head of the 40S ribosomal subunit in the vicinity of the mRNA exit channel, RACK1 serves as a scaffold protein that can recruit other proteins to the ribosome. Involved in induction of the ribosome quality control (RQC) pathway; a pathway that degrades nascent peptide chains during problematic translation. Involved in the negative regulation of translation of a specific subset of proteins. This Saccharomyces cerevisiae (strain ATCC 204508 / S288c) (Baker's yeast) protein is Small ribosomal subunit protein RACK1.